Consider the following 232-residue polypeptide: Probable dihydroorotate dehydrogenase B (NAD(+)), electron transfer subunit (232 aa).

The 86-residue stretch at Met-1–Pro-86 folds into the FAD-binding FR-type domain. Cys-202, Cys-207, Cys-210, and Cys-219 together coordinate [2Fe-2S] cluster.

Belongs to the PyrK family. In terms of assembly, heterotetramer of 2 PyrK and 2 PyrD type B subunits. [2Fe-2S] cluster is required as a cofactor. The cofactor is FAD.

The protein operates within pyrimidine metabolism; UMP biosynthesis via de novo pathway; orotate from (S)-dihydroorotate (NAD(+) route): step 1/1. Functionally, responsible for channeling the electrons from the oxidation of dihydroorotate from the FMN redox center in the PyrD type B subunit to the ultimate electron acceptor NAD(+). The chain is Probable dihydroorotate dehydrogenase B (NAD(+)), electron transfer subunit from Archaeoglobus fulgidus (strain ATCC 49558 / DSM 4304 / JCM 9628 / NBRC 100126 / VC-16).